A 338-amino-acid chain; its full sequence is Glycerol-3-phosphate dehydrogenase [NAD(P)+] (338 aa).

W11, R30, and K109 together coordinate NADPH. Sn-glycerol 3-phosphate contacts are provided by K109, G143, and S145. A147 serves as a coordination point for NADPH. The sn-glycerol 3-phosphate site is built by K198, D251, S261, R262, and N263. Residue K198 is the Proton acceptor of the active site. Residue R262 coordinates NADPH. The NADPH site is built by V286 and E288.

It belongs to the NAD-dependent glycerol-3-phosphate dehydrogenase family.

It localises to the cytoplasm. It carries out the reaction sn-glycerol 3-phosphate + NAD(+) = dihydroxyacetone phosphate + NADH + H(+). The enzyme catalyses sn-glycerol 3-phosphate + NADP(+) = dihydroxyacetone phosphate + NADPH + H(+). It functions in the pathway membrane lipid metabolism; glycerophospholipid metabolism. Functionally, catalyzes the reduction of the glycolytic intermediate dihydroxyacetone phosphate (DHAP) to sn-glycerol 3-phosphate (G3P), the key precursor for phospholipid synthesis. The chain is Glycerol-3-phosphate dehydrogenase [NAD(P)+] from Cupriavidus taiwanensis (strain DSM 17343 / BCRC 17206 / CCUG 44338 / CIP 107171 / LMG 19424 / R1) (Ralstonia taiwanensis (strain LMG 19424)).